The chain runs to 293 residues: 33 kDa chaperonin (293 aa).

Disulfide bonds link C238–C240 and C271–C274.

It belongs to the HSP33 family. In terms of processing, under oxidizing conditions two disulfide bonds are formed involving the reactive cysteines. Under reducing conditions zinc is bound to the reactive cysteines and the protein is inactive.

It is found in the cytoplasm. In terms of biological role, redox regulated molecular chaperone. Protects both thermally unfolding and oxidatively damaged proteins from irreversible aggregation. Plays an important role in the bacterial defense system toward oxidative stress. The polypeptide is 33 kDa chaperonin (Staphylococcus epidermidis (strain ATCC 35984 / DSM 28319 / BCRC 17069 / CCUG 31568 / BM 3577 / RP62A)).